Here is a 491-residue protein sequence, read N- to C-terminus: Arginine decarboxylase (491 aa).

Lys-227 bears the N6-(pyridoxal phosphate)lysine mark.

This sequence belongs to the Orn/Lys/Arg decarboxylase class-I family. It depends on pyridoxal 5'-phosphate as a cofactor.

Its subcellular location is the cytoplasm. The enzyme catalyses L-arginine + H(+) = agmatine + CO2. The protein operates within amine and polyamine biosynthesis; agmatine biosynthesis; agmatine from L-arginine: step 1/1. Its function is as follows. Catalyzes the formation of agmatine from arginine. This chain is Arginine decarboxylase (speA), found in Halalkalibacterium halodurans (strain ATCC BAA-125 / DSM 18197 / FERM 7344 / JCM 9153 / C-125) (Bacillus halodurans).